The chain runs to 184 residues: Peptidyl-tRNA hydrolase (184 aa).

TRNA is bound at residue Y17. Residue H22 is the Proton acceptor of the active site. TRNA contacts are provided by F71, N73, and N119.

Belongs to the PTH family. Monomer.

The protein resides in the cytoplasm. It carries out the reaction an N-acyl-L-alpha-aminoacyl-tRNA + H2O = an N-acyl-L-amino acid + a tRNA + H(+). Hydrolyzes ribosome-free peptidyl-tRNAs (with 1 or more amino acids incorporated), which drop off the ribosome during protein synthesis, or as a result of ribosome stalling. In terms of biological role, catalyzes the release of premature peptidyl moieties from peptidyl-tRNA molecules trapped in stalled 50S ribosomal subunits, and thus maintains levels of free tRNAs and 50S ribosomes. In Corynebacterium diphtheriae (strain ATCC 700971 / NCTC 13129 / Biotype gravis), this protein is Peptidyl-tRNA hydrolase.